The sequence spans 545 residues: ATP synthase subunit alpha (545 aa).

G173 to S180 serves as a coordination point for ATP.

This sequence belongs to the ATPase alpha/beta chains family. F-type ATPases have 2 components, CF(1) - the catalytic core - and CF(0) - the membrane proton channel. CF(1) has five subunits: alpha(3), beta(3), gamma(1), delta(1), epsilon(1). CF(0) has three main subunits: a(1), b(2) and c(9-12). The alpha and beta chains form an alternating ring which encloses part of the gamma chain. CF(1) is attached to CF(0) by a central stalk formed by the gamma and epsilon chains, while a peripheral stalk is formed by the delta and b chains.

It localises to the cell membrane. It catalyses the reaction ATP + H2O + 4 H(+)(in) = ADP + phosphate + 5 H(+)(out). In terms of biological role, produces ATP from ADP in the presence of a proton gradient across the membrane. The alpha chain is a regulatory subunit. The chain is ATP synthase subunit alpha from Arthrobacter sp. (strain FB24).